A 197-amino-acid chain; its full sequence is NADH-quinone oxidoreductase subunit C (197 aa).

The protein belongs to the complex I 30 kDa subunit family. In terms of assembly, NDH-1 is composed of 14 different subunits. Subunits NuoB, C, D, E, F, and G constitute the peripheral sector of the complex.

The protein localises to the cell inner membrane. The catalysed reaction is a quinone + NADH + 5 H(+)(in) = a quinol + NAD(+) + 4 H(+)(out). In terms of biological role, NDH-1 shuttles electrons from NADH, via FMN and iron-sulfur (Fe-S) centers, to quinones in the respiratory chain. The immediate electron acceptor for the enzyme in this species is believed to be ubiquinone. Couples the redox reaction to proton translocation (for every two electrons transferred, four hydrogen ions are translocated across the cytoplasmic membrane), and thus conserves the redox energy in a proton gradient. In Neisseria meningitidis serogroup C (strain 053442), this protein is NADH-quinone oxidoreductase subunit C.